Reading from the N-terminus, the 296-residue chain is Phosphoribosylaminoimidazole-succinocarboxamide synthase (296 aa).

The protein belongs to the SAICAR synthetase family.

The catalysed reaction is 5-amino-1-(5-phospho-D-ribosyl)imidazole-4-carboxylate + L-aspartate + ATP = (2S)-2-[5-amino-1-(5-phospho-beta-D-ribosyl)imidazole-4-carboxamido]succinate + ADP + phosphate + 2 H(+). It participates in purine metabolism; IMP biosynthesis via de novo pathway; 5-amino-1-(5-phospho-D-ribosyl)imidazole-4-carboxamide from 5-amino-1-(5-phospho-D-ribosyl)imidazole-4-carboxylate: step 1/2. In Geobacter sp. (strain M21), this protein is Phosphoribosylaminoimidazole-succinocarboxamide synthase.